The chain runs to 160 residues: Lymphocyte antigen 96 (160 aa).

Residues 1 to 18 (MLPFLFFSTLFSSIFTEA) form the signal peptide. Cystine bridges form between C25–C51, C37–C148, and C95–C105. An N-linked (GlcNAc...) asparagine glycan is attached at N26. N-linked (GlcNAc...) asparagine glycosylation occurs at N114. The segment at 119–123 (FSFKG) is interaction with lipopolysaccharide.

As to quaternary structure, heterogeneous homomer formed from homodimers; disulfide-linked. Belongs to the lipopolysaccharide (LPS) receptor, a multi-protein complex containing at least CD14, LY96 and TLR4. Binds to the extracellular domains of TLR2 and TLR4. Ligand binding induces interaction with TLR4 and oligomerization of the complex. In terms of processing, N-glycosylated; high-mannose.

The protein resides in the secreted. The protein localises to the extracellular space. Its function is as follows. Binds bacterial lipopolysaccharide (LPS). Cooperates with TLR4 in the innate immune response to bacterial lipopolysaccharide (LPS), and with TLR2 in the response to cell wall components from Gram-positive and Gram-negative bacteria. Enhances TLR4-dependent activation of NF-kappa-B. Cells expressing both LY96 and TLR4, but not TLR4 alone, respond to LPS. The polypeptide is Lymphocyte antigen 96 (LY96) (Homo sapiens (Human)).